Reading from the N-terminus, the 305-residue chain is Serine/threonine-protein phosphatase PP-X isozyme 1 (305 aa).

Positions 51, 53, 79, and 111 each coordinate Mn(2+). H112 functions as the Proton donor in the catalytic mechanism. H161 and H236 together coordinate Mn(2+).

Belongs to the PPP phosphatase family. PP-4 (PP-X) subfamily. Interacts with TAP46. The cofactor is Mn(2+). As to expression, ubiquitous, mostly expressed in root mersitems, flowers, and vascular tissues.

It is found in the plastid stroma. It carries out the reaction O-phospho-L-seryl-[protein] + H2O = L-seryl-[protein] + phosphate. It catalyses the reaction O-phospho-L-threonyl-[protein] + H2O = L-threonyl-[protein] + phosphate. This chain is Serine/threonine-protein phosphatase PP-X isozyme 1 (PPX1), found in Arabidopsis thaliana (Mouse-ear cress).